The chain runs to 457 residues: Serine--tRNA ligase (457 aa).

L-serine is bound at residue 252–254 (TAE). Residues 283–285 (RKE) and Val299 contribute to the ATP site. Glu306 lines the L-serine pocket. Residue 370-373 (EMVS) participates in ATP binding. Thr406 lines the L-serine pocket.

This sequence belongs to the class-II aminoacyl-tRNA synthetase family. Type-1 seryl-tRNA synthetase subfamily. As to quaternary structure, homodimer. The tRNA molecule binds across the dimer.

It is found in the cytoplasm. It catalyses the reaction tRNA(Ser) + L-serine + ATP = L-seryl-tRNA(Ser) + AMP + diphosphate + H(+). The enzyme catalyses tRNA(Sec) + L-serine + ATP = L-seryl-tRNA(Sec) + AMP + diphosphate + H(+). It functions in the pathway aminoacyl-tRNA biosynthesis; selenocysteinyl-tRNA(Sec) biosynthesis; L-seryl-tRNA(Sec) from L-serine and tRNA(Sec): step 1/1. In terms of biological role, catalyzes the attachment of serine to tRNA(Ser). Is also able to aminoacylate tRNA(Sec) with serine, to form the misacylated tRNA L-seryl-tRNA(Sec), which will be further converted into selenocysteinyl-tRNA(Sec). The chain is Serine--tRNA ligase from Saccharolobus islandicus (strain Y.G.57.14 / Yellowstone #1) (Sulfolobus islandicus).